Here is a 442-residue protein sequence, read N- to C-terminus: Radical S-adenosyl methionine domain-containing protein 1, mitochondrial (442 aa).

The transit peptide at 1–17 directs the protein to the mitochondrion; it reads MVPSGVRTGRWVAAARA. The Radical SAM core domain maps to 34 to 270; sequence ESASTRAALY…RTVLRDAGFR (237 aa). An S-adenosyl-L-methionine-binding site is contributed by tyrosine 43. [4Fe-4S] cluster-binding residues include cysteine 49, cysteine 53, and cysteine 56. S-adenosyl-L-methionine contacts are provided by residues glycine 98, 99-100, glutamate 131, glutamine 158, arginine 170, and aspartate 195; that span reads GT.

Belongs to the anaerobic coproporphyrinogen-III oxidase family. HemW subfamily. It depends on [4Fe-4S] cluster as a cofactor.

Its subcellular location is the mitochondrion. May be a heme chaperone, appears to bind heme. Homologous bacterial proteins do not have oxygen-independent coproporphyrinogen-III oxidase activity. Binds 1 [4Fe-4S] cluster. The cluster is coordinated with 3 cysteines and an exchangeable S-adenosyl-L-methionine. This Mus musculus (Mouse) protein is Radical S-adenosyl methionine domain-containing protein 1, mitochondrial (Rsad1).